The chain runs to 98 residues: Large ribosomal subunit protein eL21 (98 aa).

This sequence belongs to the eukaryotic ribosomal protein eL21 family.

The chain is Large ribosomal subunit protein eL21 from Korarchaeum cryptofilum (strain OPF8).